The following is a 207-amino-acid chain: Vascular endothelial growth factor B (207 aa).

An N-terminal signal peptide occupies residues 1–21; the sequence is MSPLLRRLLLVALLQLACTQA. Intrachain disulfides connect cysteine 78–cysteine 122 and cysteine 82–cysteine 124. Residues 140 to 182 form a disordered region; sequence IPHHRPQPRSVLSWDSAPGASSPADIIHPTPAPGPSAHAAPSA.

This sequence belongs to the PDGF/VEGF growth factor family. In terms of assembly, homodimer; disulfide-linked. Can also form heterodimer with VEGF.

It localises to the secreted. Functionally, growth factor for endothelial cells. VEGF-B167 binds heparin and neuropilin-1 whereas the binding to neuropilin-1 of VEGF-B186 is regulated by proteolysis. The protein is Vascular endothelial growth factor B (Vegfb) of Rattus norvegicus (Rat).